A 260-amino-acid chain; its full sequence is Carbonic anhydrase 3 (260 aa).

Ala-2 is subject to N-acetylalanine. The region spanning 3–259 is the Alpha-carbonic anhydrase domain; it reads KEWGYASHNG…VKGRVVRASF (257 aa). Phosphoserine occurs at positions 29, 43, 48, 50, and 55. The segment at 64–67 is involved in proton transfer; that stretch reads KTCR. Thr-73 carries the post-translational modification Phosphothreonine. 3 residues coordinate Zn(2+): His-94, His-96, and His-119. Position 127 is a phosphotyrosine (Tyr-127). Phosphothreonine is present on residues Thr-129 and Thr-176. Cys-182 and Cys-187 each carry S-glutathionyl cysteine. 198–199 lines the substrate pocket; the sequence is TT. Phosphothreonine is present on Thr-216. Residue Ser-219 is modified to Phosphoserine.

This sequence belongs to the alpha-carbonic anhydrase family. Zn(2+) serves as cofactor. Post-translationally, S-thiolated both by thiol-disulfide exchange with glutathione disulfide and by oxyradical-initiated S-thiolation with reduced glutathione. In terms of processing, S-glutathionylated in hepatocytes under oxidative stress. Expressed at lower levels in adipose tissue from animals that were either genetically obese or had experimentally induced obesity.

It is found in the cytoplasm. The enzyme catalyses hydrogencarbonate + H(+) = CO2 + H2O. Its activity is regulated as follows. Inhibited by acetazolamide. Its function is as follows. Reversible hydration of carbon dioxide. This Mus musculus (Mouse) protein is Carbonic anhydrase 3.